We begin with the raw amino-acid sequence, 139 residues long: Nucleoside diphosphate kinase (139 aa).

Positions 12, 60, 88, 94, 105, and 115 each coordinate ATP. The active-site Pros-phosphohistidine intermediate is the histidine 118.

It belongs to the NDK family. Homotetramer. Mg(2+) serves as cofactor.

The protein resides in the cytoplasm. It catalyses the reaction a 2'-deoxyribonucleoside 5'-diphosphate + ATP = a 2'-deoxyribonucleoside 5'-triphosphate + ADP. The enzyme catalyses a ribonucleoside 5'-diphosphate + ATP = a ribonucleoside 5'-triphosphate + ADP. Functionally, major role in the synthesis of nucleoside triphosphates other than ATP. The ATP gamma phosphate is transferred to the NDP beta phosphate via a ping-pong mechanism, using a phosphorylated active-site intermediate. This Caldanaerobacter subterraneus subsp. tengcongensis (strain DSM 15242 / JCM 11007 / NBRC 100824 / MB4) (Thermoanaerobacter tengcongensis) protein is Nucleoside diphosphate kinase.